We begin with the raw amino-acid sequence, 241 residues long: tRNA pseudouridine synthase B (241 aa).

Asp45 serves as the catalytic Nucleophile.

This sequence belongs to the pseudouridine synthase TruB family. Type 1 subfamily.

The enzyme catalyses uridine(55) in tRNA = pseudouridine(55) in tRNA. Its function is as follows. Responsible for synthesis of pseudouridine from uracil-55 in the psi GC loop of transfer RNAs. The protein is tRNA pseudouridine synthase B of Chlamydia muridarum (strain MoPn / Nigg).